The sequence spans 499 residues: Pleckstrin homology domain-containing family O member 2 (499 aa).

Over residues 1–11 (MEEEGVKEGGQ) the composition is skewed to basic and acidic residues. Residues 1–21 (MEEEGVKEGGQRPRSAQTADK) form a disordered region. Positions 18–119 (TADKAGWIKK…WIKALNEGIN (102 aa)) constitute a PH domain. Ser-167 bears the Phosphoserine mark. The tract at residues 170–419 (LSRLDLDVPD…RRRQPGEQLH (250 aa)) is disordered. A compositionally biased stretch (pro residues) spans 201–212 (RPPMPPAKPSPA). Low complexity predominate over residues 229 to 238 (SAPAPVPASS). Phosphoserine is present on residues Ser-237 and Ser-238. Positions 246–258 (EDLETPVVEDSDS) are enriched in acidic residues. At Ser-273 the chain carries Phosphoserine. Residues Thr-298 and Thr-311 each carry the phosphothreonine modification. 2 stretches are compositionally biased toward low complexity: residues 329 to 349 (EASG…GPAE) and 367 to 386 (AAGP…TLPP). Ser-399 bears the Phosphoserine mark. Positions 416–492 (EQLHRAQLEV…LREKRRELVT (77 aa)) form a coiled coil.

The protein is Pleckstrin homology domain-containing family O member 2 (PLEKHO2) of Bos taurus (Bovine).